We begin with the raw amino-acid sequence, 270 residues long: Shikimate dehydrogenase (NADP(+)) (270 aa).

Residues Ser-15–Ser-17 and Thr-62 contribute to the shikimate site. Lys-66 serves as the catalytic Proton acceptor. Asp-78 contributes to the NADP(+) binding site. Shikimate-binding residues include Asn-87 and Asp-103. NADP(+)-binding positions include Gly-128–Ala-132, Asn-152–Arg-157, and Leu-213. Tyr-215 serves as a coordination point for shikimate. Position 237 (Gly-237) interacts with NADP(+).

It belongs to the shikimate dehydrogenase family. Homodimer.

The enzyme catalyses shikimate + NADP(+) = 3-dehydroshikimate + NADPH + H(+). It participates in metabolic intermediate biosynthesis; chorismate biosynthesis; chorismate from D-erythrose 4-phosphate and phosphoenolpyruvate: step 4/7. Its function is as follows. Involved in the biosynthesis of the chorismate, which leads to the biosynthesis of aromatic amino acids. Catalyzes the reversible NADPH linked reduction of 3-dehydroshikimate (DHSA) to yield shikimate (SA). The sequence is that of Shikimate dehydrogenase (NADP(+)) from Halorhodospira halophila (strain DSM 244 / SL1) (Ectothiorhodospira halophila (strain DSM 244 / SL1)).